We begin with the raw amino-acid sequence, 677 residues long: UvrABC system protein B (677 aa).

A Helicase ATP-binding domain is found at A27–I414. ATP is bound at residue G40 to T47. The Beta-hairpin motif lies at Y93–I116. Residues Q432–L594 form the Helicase C-terminal domain. The region spanning A638–R673 is the UVR domain.

This sequence belongs to the UvrB family. Forms a heterotetramer with UvrA during the search for lesions. Interacts with UvrC in an incision complex.

It localises to the cytoplasm. In terms of biological role, the UvrABC repair system catalyzes the recognition and processing of DNA lesions. A damage recognition complex composed of 2 UvrA and 2 UvrB subunits scans DNA for abnormalities. Upon binding of the UvrA(2)B(2) complex to a putative damaged site, the DNA wraps around one UvrB monomer. DNA wrap is dependent on ATP binding by UvrB and probably causes local melting of the DNA helix, facilitating insertion of UvrB beta-hairpin between the DNA strands. Then UvrB probes one DNA strand for the presence of a lesion. If a lesion is found the UvrA subunits dissociate and the UvrB-DNA preincision complex is formed. This complex is subsequently bound by UvrC and the second UvrB is released. If no lesion is found, the DNA wraps around the other UvrB subunit that will check the other stand for damage. This chain is UvrABC system protein B, found in Nitratidesulfovibrio vulgaris (strain ATCC 29579 / DSM 644 / CCUG 34227 / NCIMB 8303 / VKM B-1760 / Hildenborough) (Desulfovibrio vulgaris).